Consider the following 42-residue polypeptide: Proline-rich antimicrobial peptide 2 (42 aa).

As to expression, hemolymph.

It localises to the secreted. Its function is as follows. Antimicrobial protein. Has antibacterial activity against the Gram-positive bacterium M.luteus (MIC=8.6 uM). Lacks antibacterial activity against the Gram-positive bacteria B.circulans, L.monocytogenes, S.aureus, and S.lutea, and the Gram-negative bacteria E.coli D31, E.coli ATCC 25922, and S.typhimurium. Lacks antifungal activity against S.cerevisiae, P.pastoris, Z.marxianus, C.albicans, C.fructus, C.wickerhamii, A.niger, F.oxysporum, and T.harizianum. This is Proline-rich antimicrobial peptide 2 from Galleria mellonella (Greater wax moth).